Consider the following 289-residue polypeptide: Pyridoxal kinase PdxY (289 aa).

Residues Ser-9 and Thr-44–Gln-45 contribute to the substrate site. ATP-binding residues include Asp-112, Ala-144, Glu-149, and Lys-182. Asp-225 serves as a coordination point for substrate.

This sequence belongs to the pyridoxine kinase family. PdxY subfamily. In terms of assembly, homodimer. Requires Mg(2+) as cofactor.

It carries out the reaction pyridoxal + ATP = pyridoxal 5'-phosphate + ADP + H(+). The protein operates within cofactor metabolism; pyridoxal 5'-phosphate salvage; pyridoxal 5'-phosphate from pyridoxal: step 1/1. Pyridoxal kinase involved in the salvage pathway of pyridoxal 5'-phosphate (PLP). Catalyzes the phosphorylation of pyridoxal to PLP. In Aliivibrio fischeri (strain ATCC 700601 / ES114) (Vibrio fischeri), this protein is Pyridoxal kinase PdxY.